The following is a 183-amino-acid chain: UPF0397 protein VFMJ11_1662 (183 aa).

5 helical membrane passes run 8–28, 41–61, 75–95, 110–130, and 147–167; these read VVVI…MFGI, AVLA…VGFI, WLTW…FPII, FLIF…TSAF, and LCII…FILN.

It belongs to the UPF0397 family.

It is found in the cell membrane. This is UPF0397 protein VFMJ11_1662 from Aliivibrio fischeri (strain MJ11) (Vibrio fischeri).